Reading from the N-terminus, the 430-residue chain is Tol-Pal system protein TolB (430 aa).

Positions 1–21 are cleaved as a signal peptide; that stretch reads MKQALRVAFGFLMLWAAVLHA.

It belongs to the TolB family. The Tol-Pal system is composed of five core proteins: the inner membrane proteins TolA, TolQ and TolR, the periplasmic protein TolB and the outer membrane protein Pal. They form a network linking the inner and outer membranes and the peptidoglycan layer.

The protein localises to the periplasm. In terms of biological role, part of the Tol-Pal system, which plays a role in outer membrane invagination during cell division and is important for maintaining outer membrane integrity. TolB occupies a key intermediary position in the Tol-Pal system because it communicates directly with both membrane-embedded components, Pal in the outer membrane and TolA in the inner membrane. The polypeptide is Tol-Pal system protein TolB (Salmonella enteritidis PT4 (strain P125109)).